The sequence spans 392 residues: Glycerophosphodiester phosphodiesterase GDPD5 (392 aa).

The N-terminal stretch at 1 to 21 (MILTRCLPLIWLSLLTVCAAG) is a signal peptide. The GP-PDE domain maps to 44–362 (PYNIAHRGSN…DFTGSLHNFQ (319 aa)). N-linked (GlcNAc...) asparagine glycans are attached at residues N120, N239, N260, and N329.

Belongs to the glycerophosphoryl diester phosphodiesterase family. In terms of tissue distribution, expressed in roots, rosette and cauline leaves, stems, flowers and siliques.

It localises to the secreted. The protein resides in the cell wall. Its subcellular location is the vacuole. It catalyses the reaction a sn-glycero-3-phosphodiester + H2O = an alcohol + sn-glycerol 3-phosphate + H(+). In Arabidopsis thaliana (Mouse-ear cress), this protein is Glycerophosphodiester phosphodiesterase GDPD5.